The following is a 61-amino-acid chain: Small ribosomal subunit protein uS14B (61 aa).

Residues C24, C27, C40, and C43 each coordinate Zn(2+).

The protein belongs to the universal ribosomal protein uS14 family. Zinc-binding uS14 subfamily. As to quaternary structure, part of the 30S ribosomal subunit. Contacts proteins S3 and S10. It depends on Zn(2+) as a cofactor.

Functionally, binds 16S rRNA, required for the assembly of 30S particles and may also be responsible for determining the conformation of the 16S rRNA at the A site. This Mycolicibacterium gilvum (strain PYR-GCK) (Mycobacterium gilvum (strain PYR-GCK)) protein is Small ribosomal subunit protein uS14B.